The primary structure comprises 286 residues: Pantothenate synthetase (286 aa).

Residue 30-37 (MGNLHEGH) participates in ATP binding. The active-site Proton donor is histidine 37. Position 61 (glutamine 61) interacts with (R)-pantoate. Residue glutamine 61 participates in beta-alanine binding. ATP is bound at residue 149-152 (GRKD). Residue glutamine 155 participates in (R)-pantoate binding. ATP-binding positions include valine 178 and 186–189 (MSSR).

It belongs to the pantothenate synthetase family. Homodimer.

The protein localises to the cytoplasm. The enzyme catalyses (R)-pantoate + beta-alanine + ATP = (R)-pantothenate + AMP + diphosphate + H(+). Its pathway is cofactor biosynthesis; (R)-pantothenate biosynthesis; (R)-pantothenate from (R)-pantoate and beta-alanine: step 1/1. Functionally, catalyzes the condensation of pantoate with beta-alanine in an ATP-dependent reaction via a pantoyl-adenylate intermediate. In Alkalilimnicola ehrlichii (strain ATCC BAA-1101 / DSM 17681 / MLHE-1), this protein is Pantothenate synthetase.